Consider the following 480-residue polypeptide: Proline--tRNA ligase (480 aa).

It belongs to the class-II aminoacyl-tRNA synthetase family. ProS type 3 subfamily. As to quaternary structure, homodimer.

Its subcellular location is the cytoplasm. The enzyme catalyses tRNA(Pro) + L-proline + ATP = L-prolyl-tRNA(Pro) + AMP + diphosphate. Catalyzes the attachment of proline to tRNA(Pro) in a two-step reaction: proline is first activated by ATP to form Pro-AMP and then transferred to the acceptor end of tRNA(Pro). This chain is Proline--tRNA ligase, found in Metallosphaera sedula (strain ATCC 51363 / DSM 5348 / JCM 9185 / NBRC 15509 / TH2).